The sequence spans 427 residues: Putative B3 domain-containing protein Os04g0346900 (427 aa).

DNA-binding regions (TF-B3) lie at residues 25–118 (LVPS…FDTT) and 140–236 (KPQF…FGPN). A disordered region spans residues 253 to 309 (TGEQQEAPSFSRRKCNNKKKSRFGEDDGNQQEMPCSRKGSGNKGRTSDRETKRMRKT). Positions 263-273 (SRRKCNNKKKS) are enriched in basic residues. The segment at residues 320 to 427 (WIKKEINEYV…TLWRVDIERC (108 aa)) is a DNA-binding region (TF-B3 3).

The protein resides in the nucleus. The protein is Putative B3 domain-containing protein Os04g0346900 of Oryza sativa subsp. japonica (Rice).